A 474-amino-acid polypeptide reads, in one-letter code: Hydrogenobyrinate a,c-diamide synthase (474 aa).

One can recognise a GATase cobBQ-type domain in the interval 269 to 459 (VVAVAGGQAF…LHTHWAGCPQ (191 aa)). Cys-352 (nucleophile) is an active-site residue.

The protein belongs to the CobB/CbiA family. Requires Mg(2+) as cofactor.

The enzyme catalyses hydrogenobyrinate + 2 L-glutamine + 2 ATP + 2 H2O = hydrogenobyrinate a,c-diamide + 2 L-glutamate + 2 ADP + 2 phosphate + 2 H(+). It participates in cofactor biosynthesis; adenosylcobalamin biosynthesis; cob(II)yrinate a,c-diamide from precorrin-2 (aerobic route): step 9/10. Its function is as follows. Catalyzes the ATP-dependent amidation of the two carboxylate groups at positions a and c of hydrogenobyrinate, using either L-glutamine or ammonia as the nitrogen source. This Thermobifida fusca (strain YX) protein is Hydrogenobyrinate a,c-diamide synthase.